The sequence spans 106 residues: Small ribosomal subunit protein uS10 (106 aa).

Belongs to the universal ribosomal protein uS10 family. Part of the 30S ribosomal subunit.

Functionally, involved in the binding of tRNA to the ribosomes. The sequence is that of Small ribosomal subunit protein uS10 from Pyrobaculum neutrophilum (strain DSM 2338 / JCM 9278 / NBRC 100436 / V24Sta) (Thermoproteus neutrophilus).